A 223-amino-acid chain; its full sequence is GRF1-interacting factor 3 (223 aa).

The segment at 179-223 is disordered; sequence ANNAGPNDASGGGKPDGTNMSQSGADGQGGSAARHGGGDAKTEGK. A compositionally biased stretch (basic and acidic residues) spans 214–223; that stretch reads GGGDAKTEGK.

Belongs to the SS18 family. Interacts with GRF1. In terms of tissue distribution, predominantly expressed in shoot tips containing the shoot apical meristem (SAM) and flower buds. Also expressed in mature flowers.

Functionally, transcription coactivator that plays a role in the regulation of cell expansion in leaf and cotyledons tissues. Component of a network formed by miR396, the GRFs and their interacting factors (GIFs) acting in the regulation of meristem function, at least partially through the control of cell proliferation. GIFs are involved in the positive regulation of cell proliferation of lateral organs in a functionally redundant manner. This Arabidopsis thaliana (Mouse-ear cress) protein is GRF1-interacting factor 3 (GIF3).